The following is a 145-amino-acid chain: D-aminoacyl-tRNA deacylase (145 aa).

The Gly-cisPro motif, important for rejection of L-amino acids signature appears at 137-138; sequence GP.

Belongs to the DTD family. In terms of assembly, homodimer.

The protein resides in the cytoplasm. It catalyses the reaction glycyl-tRNA(Ala) + H2O = tRNA(Ala) + glycine + H(+). It carries out the reaction a D-aminoacyl-tRNA + H2O = a tRNA + a D-alpha-amino acid + H(+). Its function is as follows. An aminoacyl-tRNA editing enzyme that deacylates mischarged D-aminoacyl-tRNAs. Also deacylates mischarged glycyl-tRNA(Ala), protecting cells against glycine mischarging by AlaRS. Acts via tRNA-based rather than protein-based catalysis; rejects L-amino acids rather than detecting D-amino acids in the active site. By recycling D-aminoacyl-tRNA to D-amino acids and free tRNA molecules, this enzyme counteracts the toxicity associated with the formation of D-aminoacyl-tRNA entities in vivo and helps enforce protein L-homochirality. The polypeptide is D-aminoacyl-tRNA deacylase (Shewanella halifaxensis (strain HAW-EB4)).